The following is a 173-amino-acid chain: NADH-ubiquinone oxidoreductase chain 6 (173 aa).

The next 5 helical transmembrane spans lie at 1–21, 27–47, 48–68, 87–107, and 139–159; these read MTYFVLFLGLCFVLGGLAVAS, YGVVGLVVASVAGCGWLLSLG, VSFVSLVLFMVYLGGMLVVFV, VVGYGAGFVLVLVVGGVVGGL, and CGVGMFLVAGWGLLLTLFVVL.

It belongs to the complex I subunit 6 family.

It localises to the mitochondrion membrane. The enzyme catalyses a ubiquinone + NADH + 5 H(+)(in) = a ubiquinol + NAD(+) + 4 H(+)(out). Core subunit of the mitochondrial membrane respiratory chain NADH dehydrogenase (Complex I) that is believed to belong to the minimal assembly required for catalysis. Complex I functions in the transfer of electrons from NADH to the respiratory chain. The immediate electron acceptor for the enzyme is believed to be ubiquinone. This is NADH-ubiquinone oxidoreductase chain 6 (MT-ND6) from Larus canus (Common gull).